The following is a 363-amino-acid chain: MITLGFMSLSRQHEADYSAELAKRAPEFGIRFIRFTPFDISPDTLRVKASVYHSASSTWNETEMAIPDYIYDRCFYGKDSHSQKAKPIVEWLKKYPKTEFIGRGLPDKWTVLHDLQQHSVINPYIPETIKVSRYEQIHSFLSKEKACILKPAFGAGGRGVILLKLGKKNITATYHIGKDKQTKTFSNQTSFKTWCKKVLQHQYLLQPYLNIQDKEQYPCDIRLFMEKNEAGEWNTVGKAVRRGYKHGLLANLSGGSDALTFDSWFEDIPKKQQVVLLDDVFSITQSVPYYLDERYGPLFELGLDICLAKDGRIWILDINSKPGRKSILRVSPEQKEQLYTCPLKRCQYLFSEQSQKGVLPRES.

It belongs to the YheC/YheD family.

Its subcellular location is the forespore outer membrane. The protein localises to the spore coat. In terms of biological role, involved in sporulation. The sequence is that of Endospore coat-associated protein YheC (yheC) from Bacillus subtilis (strain 168).